The chain runs to 289 residues: Phosphoribulokinase (289 aa).

12–20 (GSSGAGTTT) is an ATP binding site.

The protein belongs to the phosphoribulokinase family.

It carries out the reaction D-ribulose 5-phosphate + ATP = D-ribulose 1,5-bisphosphate + ADP + H(+). It participates in carbohydrate biosynthesis; Calvin cycle. This chain is Phosphoribulokinase (cbbP), found in Sinorhizobium medicae (strain WSM419) (Ensifer medicae).